A 299-amino-acid chain; its full sequence is Transcription elongation factor A protein 2 (299 aa).

The 78-residue stretch at 5–82 (EEIARIARRL…KSWKKLLDVS (78 aa)) folds into the TFIIS N-terminal domain. Lysine 57 participates in a covalent cross-link: Glycyl lysine isopeptide (Lys-Gly) (interchain with G-Cter in ubiquitin). 2 positions are modified to phosphoserine: serine 59 and serine 100. Positions 83–126 (DGKSRDQGRGTPLPTSSSKDASGTTDLSCKKPDPPRTSSTPRIT) are disordered. Residues 95–109 (LPTSSSKDASGTTDL) show a composition bias toward polar residues. Residues 138–254 (VRNKCREMLT…EHQMARTGGT (117 aa)) enclose the TFIIS central domain. A TFIIS-type zinc finger spans residues 257–297 (DLFTCNKCRKKNCTYTQVQTRSSDEPMTTYVVCNECGNRWK). Residues cysteine 261, cysteine 264, cysteine 289, and cysteine 292 each coordinate Zn(2+).

Belongs to the TFS-II family. In terms of assembly, interacts with the basal transcription factor GTF2B. Interacts with REXO1. In terms of tissue distribution, testis specific.

It is found in the nucleus. Necessary for efficient RNA polymerase II transcription elongation past template-encoded arresting sites. The arresting sites in DNA have the property of trapping a certain fraction of elongating RNA polymerases that pass through, resulting in locked ternary complexes. Cleavage of the nascent transcript by S-II allows the resumption of elongation from the new 3'-terminus. This Rattus norvegicus (Rat) protein is Transcription elongation factor A protein 2 (Tcea2).